Reading from the N-terminus, the 299-residue chain is Caspase-1 (299 aa).

Residues 1–28 (MLDGKQDNGNVDSVDIKQRTNGGGDEGD) constitute a propeptide that is removed on maturation. Residues 1 to 45 (MLDGKQDNGNVDSVDIKQRTNGGGDEGDALGSNSSSQPNRVARMP) are disordered. Catalysis depends on residues His136 and Cys178. Positions 185 to 195 (GGITLSRTETD) are excised as a propeptide.

The protein belongs to the peptidase C14A family. Heterotetramer that consists of two anti-parallel arranged heterodimers, each one formed by a 19/18 kDa (p19/18) and a 12 kDa (p12) subunit. Post-translationally, the two subunits are derived from the precursor sequence by an autocatalytic mechanism.

Involved in the activation cascade of caspases responsible for apoptosis execution. Inhibited by the baculovirus anti-apoptotic protein p35. Cleaves p35 and nuclear immunophilin FKBP46. This is Caspase-1 from Spodoptera frugiperda (Fall armyworm).